The sequence spans 171 residues: UPF0316 protein EAT1b_0871 (171 aa).

A run of 3 helical transmembrane segments spans residues 4–24 (ILLI…RTIM), 32–52 (IAGL…GIVF), and 57–77 (TVGM…GGFV).

It belongs to the UPF0316 family.

The protein resides in the cell membrane. The chain is UPF0316 protein EAT1b_0871 from Exiguobacterium sp. (strain ATCC BAA-1283 / AT1b).